The following is a 423-amino-acid chain: Imidazolonepropionase (423 aa).

Histidine 78 and histidine 80 together coordinate Fe(3+). Zn(2+)-binding residues include histidine 78 and histidine 80. Residues arginine 87, tyrosine 150, and histidine 183 each contribute to the 4-imidazolone-5-propanoate site. Tyrosine 150 is an N-formimidoyl-L-glutamate binding site. A Fe(3+)-binding site is contributed by histidine 247. Histidine 247 serves as a coordination point for Zn(2+). Glutamate 250 is a 4-imidazolone-5-propanoate binding site. Residue aspartate 322 coordinates Fe(3+). Aspartate 322 contacts Zn(2+). Residues asparagine 324 and glycine 326 each coordinate N-formimidoyl-L-glutamate. Residue serine 327 participates in 4-imidazolone-5-propanoate binding.

It belongs to the metallo-dependent hydrolases superfamily. HutI family. Zn(2+) serves as cofactor. It depends on Fe(3+) as a cofactor.

It localises to the cytoplasm. The enzyme catalyses 4-imidazolone-5-propanoate + H2O = N-formimidoyl-L-glutamate. The protein operates within amino-acid degradation; L-histidine degradation into L-glutamate; N-formimidoyl-L-glutamate from L-histidine: step 3/3. Catalyzes the hydrolytic cleavage of the carbon-nitrogen bond in imidazolone-5-propanoate to yield N-formimidoyl-L-glutamate. It is the third step in the universal histidine degradation pathway. The protein is Imidazolonepropionase of Bacillus anthracis (strain A0248).